The sequence spans 367 residues: Heme A synthase 2 (367 aa).

The next 5 membrane-spanning stretches (helical) occupy residues 28–48, 114–134, 143–163, 180–200, and 221–241; these read MVAIWLFVSFALIVEMFGIGA, MWGRLLGFDFGVPLVWFLWTG, WLVTLFVLGGVQGLIGWWMVA, VHYCFATLLAIAVFATALTVL, and MAMGSIVLISIAIVAGTFLSG. Position 284 (His-284) interacts with heme. 3 helical membrane-spanning segments follow: residues 286 to 306, 314 to 334, and 340 to 360; these read LLGTVAAVGVLAAVVAAIRAD, AFLVMGALLIVQYILGVTTLV, and IGIVHQLNAVLLLAAAVWAWF. His-344 is a heme binding site.

It belongs to the COX15/CtaA family. Type 2 subfamily. As to quaternary structure, interacts with CtaB. Heme b serves as cofactor.

It localises to the cell membrane. The catalysed reaction is Fe(II)-heme o + 2 A + H2O = Fe(II)-heme a + 2 AH2. It functions in the pathway porphyrin-containing compound metabolism; heme A biosynthesis; heme A from heme O: step 1/1. Its function is as follows. Catalyzes the conversion of heme O to heme A by two successive hydroxylations of the methyl group at C8. The first hydroxylation forms heme I, the second hydroxylation results in an unstable dihydroxymethyl group, which spontaneously dehydrates, resulting in the formyl group of heme A. The protein is Heme A synthase 2 of Acidiphilium cryptum (strain JF-5).